A 66-amino-acid chain; its full sequence is Large ribosomal subunit protein bL33c (66 aa).

It belongs to the bacterial ribosomal protein bL33 family.

Its subcellular location is the plastid. It is found in the chloroplast. The chain is Large ribosomal subunit protein bL33c from Nasturtium officinale (Watercress).